The chain runs to 386 residues: Dual-specificity RNA methyltransferase RlmN (386 aa).

The active-site Proton acceptor is the E96. The Radical SAM core domain occupies 102-340; the sequence is ENDRATLCVS…VITRRTRGED (239 aa). C109 and C345 are joined by a disulfide. Residues C116, C120, and C123 each coordinate [4Fe-4S] cluster. Residues 170 to 171, S202, 224 to 226, and N302 each bind S-adenosyl-L-methionine; these read GE and SIH. C345 acts as the S-methylcysteine intermediate in catalysis.

Belongs to the radical SAM superfamily. RlmN family. Requires [4Fe-4S] cluster as cofactor.

The protein resides in the cytoplasm. It catalyses the reaction adenosine(2503) in 23S rRNA + 2 reduced [2Fe-2S]-[ferredoxin] + 2 S-adenosyl-L-methionine = 2-methyladenosine(2503) in 23S rRNA + 5'-deoxyadenosine + L-methionine + 2 oxidized [2Fe-2S]-[ferredoxin] + S-adenosyl-L-homocysteine. It carries out the reaction adenosine(37) in tRNA + 2 reduced [2Fe-2S]-[ferredoxin] + 2 S-adenosyl-L-methionine = 2-methyladenosine(37) in tRNA + 5'-deoxyadenosine + L-methionine + 2 oxidized [2Fe-2S]-[ferredoxin] + S-adenosyl-L-homocysteine. Specifically methylates position 2 of adenine 2503 in 23S rRNA and position 2 of adenine 37 in tRNAs. m2A2503 modification seems to play a crucial role in the proofreading step occurring at the peptidyl transferase center and thus would serve to optimize ribosomal fidelity. The protein is Dual-specificity RNA methyltransferase RlmN of Colwellia psychrerythraea (strain 34H / ATCC BAA-681) (Vibrio psychroerythus).